The chain runs to 241 residues: Methylthioribulose-1-phosphate dehydratase (241 aa).

Polar residues predominate over residues 1–17; it reads MAKQVENNNNDHLVQST. A disordered region spans residues 1–21; it reads MAKQVENNNNDHLVQSTDPEH. Cys100 is a binding site for substrate. Zn(2+) contacts are provided by His117 and His119. Residue Glu146 is the Proton donor/acceptor of the active site. Residue His202 participates in Zn(2+) binding.

This sequence belongs to the aldolase class II family. MtnB subfamily. Requires Zn(2+) as cofactor.

It is found in the cytoplasm. It carries out the reaction 5-(methylsulfanyl)-D-ribulose 1-phosphate = 5-methylsulfanyl-2,3-dioxopentyl phosphate + H2O. Its pathway is amino-acid biosynthesis; L-methionine biosynthesis via salvage pathway; L-methionine from S-methyl-5-thio-alpha-D-ribose 1-phosphate: step 2/6. Catalyzes the dehydration of methylthioribulose-1-phosphate (MTRu-1-P) into 2,3-diketo-5-methylthiopentyl-1-phosphate (DK-MTP-1-P). This chain is Methylthioribulose-1-phosphate dehydratase, found in Aspergillus flavus (strain ATCC 200026 / FGSC A1120 / IAM 13836 / NRRL 3357 / JCM 12722 / SRRC 167).